The following is a 187-amino-acid chain: UPF0301 protein YqgE (187 aa).

The protein belongs to the UPF0301 (AlgH) family.

This is UPF0301 protein YqgE from Shigella boydii serotype 4 (strain Sb227).